We begin with the raw amino-acid sequence, 976 residues long: Serine/threonine-protein kinase CLA4 (976 aa).

A disordered region spans residues 1-46; that stretch reads MTSIYTSDLKNHRRAPPPPNGAAGSGSGSSSGSGSGSGSGSGSGSL. Residues 23-43 are compositionally biased toward gly residues; the sequence is AGSGSGSSSGSGSGSGSGSGS. Positions 73–184 constitute a PH domain; that stretch reads SKRQSGWVHV…WLDAFTTKCP (112 aa). Residues 207–231 are disordered; sequence LTNGSLNGNSSSSPTSGLSSSSVLT. One can recognise a CRIB domain in the interval 237-250; the sequence is VSGPINFTHKVHVG. Disordered stretches follow at residues 298–522 and 559–658; these read GGNS…KIHP and SKKS…QLKK. 2 stretches are compositionally biased toward low complexity: residues 313-332 and 371-411; these read NSKT…AKNN and LNGS…PLNN. Residues 430 to 440 show a composition bias toward polar residues; sequence SGTSSDTYSNK. The segment covering 441-455 has biased composition (basic and acidic residues); sequence NHQDRSGYEQQRQQR. Over residues 456–487 the composition is skewed to low complexity; that stretch reads TDSSQQQQQQQKQHQYQQKSQQQQQQPLSSHQ. Residues 496 to 505 are compositionally biased toward pro residues; the sequence is QVPPTLPSSG. Positions 559–583 are enriched in low complexity; sequence SKKSQQQLASKQPSPPSSQQQQQKP. Over residues 622–635 the composition is skewed to polar residues; the sequence is NETSGVSKTPSPTD. The region spanning 685-940 is the Protein kinase domain; the sequence is FRIVEKAGQG…TDELLEHSFI (256 aa). ATP is bound by residues 691-699 and Lys-715; that span reads AGQGASGNV. Asp-808 functions as the Proton acceptor in the catalytic mechanism.

The protein belongs to the protein kinase superfamily. STE Ser/Thr protein kinase family. STE20 subfamily. In terms of assembly, interacts (via the CRIB domain) with CDC42.

The catalysed reaction is L-seryl-[protein] + ATP = O-phospho-L-seryl-[protein] + ADP + H(+). The enzyme catalyses L-threonyl-[protein] + ATP = O-phospho-L-threonyl-[protein] + ADP + H(+). Ser/Thr kinase required for wild-type filamentous growth, chlamydospore formation, and virulence in mouse systemic infection. This chain is Serine/threonine-protein kinase CLA4 (CLA4), found in Candida albicans (strain SC5314 / ATCC MYA-2876) (Yeast).